Reading from the N-terminus, the 457-residue chain is MADS-box transcription factor 1 (457 aa).

The region spanning P11–E71 is the MADS-box domain. Disordered regions lie at residues S195–H278 and S295–E328. The span at S199–E216 shows a compositional bias: low complexity. Polar residues predominate over residues L218–N234. Over residues K265 to H278 the composition is skewed to basic residues. Polar residues predominate over residues S295–T317. The residue at position 372 (S372) is a Phosphoserine.

In terms of processing, phosphorylated. Occurs periodically during mitosis.

It localises to the nucleus. Functionally, acts as a transcriptional activator with a role in the regulation of mitosis. Regulates septation and the periodic transcription of cdc15. The protein is MADS-box transcription factor 1 (mbx1) of Schizosaccharomyces pombe (strain 972 / ATCC 24843) (Fission yeast).